We begin with the raw amino-acid sequence, 394 residues long: Phosphoglycerate kinase (394 aa).

Substrate-binding positions include 21–23 (DFN), Arg-36, 59–62 (HMGR), Arg-118, and Arg-151. Residues Lys-202, Glu-324, and 350 to 353 (GGDS) contribute to the ATP site.

This sequence belongs to the phosphoglycerate kinase family. In terms of assembly, monomer.

The protein localises to the cytoplasm. It carries out the reaction (2R)-3-phosphoglycerate + ATP = (2R)-3-phospho-glyceroyl phosphate + ADP. Its pathway is carbohydrate degradation; glycolysis; pyruvate from D-glyceraldehyde 3-phosphate: step 2/5. The polypeptide is Phosphoglycerate kinase (Exiguobacterium sibiricum (strain DSM 17290 / CCUG 55495 / CIP 109462 / JCM 13490 / 255-15)).